The chain runs to 430 residues: S-adenosylmethionine synthase (430 aa).

ATP is bound at residue His14. Asp16 is a binding site for Mg(2+). K(+) is bound at residue Glu42. L-methionine is bound by residues Glu55 and Gln98. The flexible loop stretch occupies residues 98-108 (QSADINRGVER). ATP contacts are provided by residues 164-166 (DAK), 254-255 (KF), Asp263, 269-270 (RK), Ala286, and Lys290. Asp263 contacts L-methionine. L-methionine is bound at residue Lys294.

It belongs to the AdoMet synthase family. Homotetramer; dimer of dimers. Requires Mg(2+) as cofactor. K(+) is required as a cofactor.

It is found in the cytoplasm. The enzyme catalyses L-methionine + ATP + H2O = S-adenosyl-L-methionine + phosphate + diphosphate. Its pathway is amino-acid biosynthesis; S-adenosyl-L-methionine biosynthesis; S-adenosyl-L-methionine from L-methionine: step 1/1. Functionally, catalyzes the formation of S-adenosylmethionine (AdoMet) from methionine and ATP. The overall synthetic reaction is composed of two sequential steps, AdoMet formation and the subsequent tripolyphosphate hydrolysis which occurs prior to release of AdoMet from the enzyme. In Bacteroides fragilis (strain ATCC 25285 / DSM 2151 / CCUG 4856 / JCM 11019 / LMG 10263 / NCTC 9343 / Onslow / VPI 2553 / EN-2), this protein is S-adenosylmethionine synthase.